Here is a 1313-residue protein sequence, read N- to C-terminus: Ataxin-2 (1313 aa).

Residues 1–12 (MRSAAAAPRSPA) show a composition bias toward low complexity. The interval 1-255 (MRSAAAAPRS…RNSNKGLPQS (255 aa)) is disordered. Positions 48–65 (GPYPSAAPPPPGPGPPPS) are enriched in pro residues. 4 stretches are compositionally biased toward low complexity: residues 104-114 (FVVLLLPLASP), 141-154 (ARPAPGCPRPACEP), 166-187 (QQQQQQQQQQQQQQQQQQQQQQ), and 204-234 (LLASPAAAPSPSSSSVSSSSATAPSSVVAAT). The span at 235–244 (SGGGRPGLGR) shows a compositional bias: gly residues. The residue at position 248 (Ser248) is a Phosphoserine. One can recognise a Sm domain in the interval 267-344 (RMVHILTSVV…FVVVQFKDMD (78 aa)). Phosphoserine is present on residues Ser393, Ser466, Ser478, Ser508, and Ser554. Basic and acidic residues-rich tracts occupy residues 459-471 (ALENDDRSEEEKY) and 478-492 (SSEREGHSINTRENK). 2 disordered regions span residues 459–954 (ALEN…HQQP) and 1137–1219 (NATL…NSFP). Polar residues predominate over residues 508 to 544 (SGRQNSPRMGQPGSGSMPSRSTSHTSDFNPNSGSDQR). Residues 552–562 (WPSPCPSPSSR) are compositionally biased toward pro residues. Low complexity predominate over residues 563–581 (PPSRYQSGPNSLPPRAATP). A compositionally biased stretch (pro residues) spans 582–598 (TRPPSRPPSRPSRPPSH). Phosphoserine is present on Ser624. Residues 627 to 637 (AQRHPRNHRVS) are compositionally biased toward basic residues. Arg640 bears the Asymmetric dimethylarginine; alternate mark. Omega-N-methylarginine; alternate is present on Arg640. Ser642 carries the phosphoserine modification. The segment covering 666–681 (TSPSGGTWSSVVSGVP) has biased composition (low complexity). The residue at position 684 (Ser684) is a Phosphoserine. The span at 693-703 (PRQNSIGNTPS) shows a compositional bias: polar residues. The residue at position 728 (Ser728) is a Phosphoserine. The residue at position 741 (Thr741) is a Phosphothreonine. Positions 768–777 (PNETSPSFSK) are enriched in polar residues. 2 positions are modified to phosphoserine: Ser772 and Ser784. A compositionally biased stretch (basic and acidic residues) spans 788-804 (SEHRKQIDDLKKFKNDF). Over residues 807–820 (QPSSTSESMDQLLN) the composition is skewed to polar residues. Residues 821–844 (KNREGEKSRDLIKDKIEPSAKDSF) are compositionally biased toward basic and acidic residues. The span at 847–871 (NSSSNCTSGSSKPNSPSISPSILSN) shows a compositional bias: low complexity. A phosphoserine mark is found at Ser856, Ser857, Ser861, Ser865, Ser867, Ser888, and Ser889. The segment covering 880–891 (VTSQGVQTSSPA) has biased composition (polar residues). A Glycyl lysine isopeptide (Lys-Gly) (interchain with G-Cter in SUMO2) cross-link involves residue Lys893. Residues 893-910 (KQEKDDKEEKKDAAEQVR) are compositionally biased toward basic and acidic residues. Composition is skewed to low complexity over residues 925–936 (SFSQPKPSTTPT) and 1155–1192 (GQQQSQHGGSHPAPSPVQHHQHQAAQALHLASPQQQSA). A compositionally biased stretch (polar residues) spans 1206-1219 (TPASNTQSPQNSFP).

The protein belongs to the ataxin-2 family. Monomer. Can also form homodimers. Interacts with TARDBP; the interaction is RNA-dependent. Interacts with RBFOX1. Interacts with polyribosomes. Interacts with SH3GL2 and SH3GL3. Interacts with SH3KBP1 and CBL. Interacts with EGFR. Interacts with ATXN2L. In terms of tissue distribution, expressed in the brain, heart, liver, skeletal muscle, pancreas and placenta. Isoform 1 is predominant in the brain and spinal cord. Isoform 4 is more abundant in the cerebellum. In the brain, broadly expressed in the amygdala, caudate nucleus, corpus callosum, hippocampus, hypothalamus, substantia nigra, subthalamic nucleus and thalamus.

The protein resides in the cytoplasm. Its function is as follows. Involved in EGFR trafficking, acting as negative regulator of endocytic EGFR internalization at the plasma membrane. This Homo sapiens (Human) protein is Ataxin-2 (ATXN2).